Reading from the N-terminus, the 239-residue chain is 4-hydroxy-tetrahydrodipicolinate reductase (239 aa).

NAD(+) is bound by residues 8-13 (GSTGKM), 78-80 (GTT), and 102-105 (SANM). His134 serves as the catalytic Proton donor/acceptor. His135 is a (S)-2,3,4,5-tetrahydrodipicolinate binding site. Lys138 functions as the Proton donor in the catalytic mechanism. Residue 144-145 (GT) coordinates (S)-2,3,4,5-tetrahydrodipicolinate.

Belongs to the DapB family.

Its subcellular location is the cytoplasm. It catalyses the reaction (S)-2,3,4,5-tetrahydrodipicolinate + NAD(+) + H2O = (2S,4S)-4-hydroxy-2,3,4,5-tetrahydrodipicolinate + NADH + H(+). The catalysed reaction is (S)-2,3,4,5-tetrahydrodipicolinate + NADP(+) + H2O = (2S,4S)-4-hydroxy-2,3,4,5-tetrahydrodipicolinate + NADPH + H(+). The protein operates within amino-acid biosynthesis; L-lysine biosynthesis via DAP pathway; (S)-tetrahydrodipicolinate from L-aspartate: step 4/4. Functionally, catalyzes the conversion of 4-hydroxy-tetrahydrodipicolinate (HTPA) to tetrahydrodipicolinate. This is 4-hydroxy-tetrahydrodipicolinate reductase from Rickettsia conorii (strain ATCC VR-613 / Malish 7).